Reading from the N-terminus, the 75-residue chain is Acyl carrier protein (75 aa).

In terms of domain architecture, Carrier spans 1 to 75; it reads MIFEKVRDII…DVVEYLSNLE (75 aa). Residue serine 35 is modified to O-(pantetheine 4'-phosphoryl)serine.

The protein belongs to the acyl carrier protein (ACP) family. Post-translationally, 4'-phosphopantetheine is transferred from CoA to a specific serine of apo-ACP by AcpS. This modification is essential for activity because fatty acids are bound in thioester linkage to the sulfhydryl of the prosthetic group.

The protein resides in the cytoplasm. It functions in the pathway lipid metabolism; fatty acid biosynthesis. Carrier of the growing fatty acid chain in fatty acid biosynthesis. In Thermoanaerobacter pseudethanolicus (strain ATCC 33223 / 39E) (Clostridium thermohydrosulfuricum), this protein is Acyl carrier protein.